The sequence spans 359 residues: Tryptophan 2,3-dioxygenase (359 aa).

Substrate is bound by residues 38 to 42 (FIIVH) and arginine 109. Histidine 295 provides a ligand contact to heme. Substrate is bound at residue threonine 309.

This sequence belongs to the tryptophan 2,3-dioxygenase family. As to quaternary structure, homotetramer. The cofactor is heme.

The catalysed reaction is L-tryptophan + O2 = N-formyl-L-kynurenine. It functions in the pathway amino-acid degradation; L-tryptophan degradation via kynurenine pathway; L-kynurenine from L-tryptophan: step 1/2. Heme-dependent dioxygenase that catalyzes the oxidative cleavage of the L-tryptophan (L-Trp) pyrrole ring and converts L-tryptophan to N-formyl-L-kynurenine. Catalyzes the oxidative cleavage of the indole moiety. The polypeptide is Tryptophan 2,3-dioxygenase (Bdellovibrio bacteriovorus (strain ATCC 15356 / DSM 50701 / NCIMB 9529 / HD100)).